The following is a 163-amino-acid chain: Protein MATERNALLY EXPRESSED GENE 5 (163 aa).

The RRM domain maps to 38–117 (STLYIEGLPA…DDVNVSAPAE (80 aa)). Intrachain disulfides connect Cys140–Cys162 and Cys143–Cys151.

This sequence belongs to the MEG family. In terms of tissue distribution, ubiquitous.

This Zea mays (Maize) protein is Protein MATERNALLY EXPRESSED GENE 5 (MEG5).